The primary structure comprises 210 residues: Uracil phosphoribosyltransferase (210 aa).

Residues R78, R103, and 130–138 (DPMLATGGS) each bind 5-phospho-alpha-D-ribose 1-diphosphate. Uracil contacts are provided by residues I193 and 198 to 200 (GDA). D199 serves as a coordination point for 5-phospho-alpha-D-ribose 1-diphosphate.

Belongs to the UPRTase family. It depends on Mg(2+) as a cofactor.

The enzyme catalyses UMP + diphosphate = 5-phospho-alpha-D-ribose 1-diphosphate + uracil. It functions in the pathway pyrimidine metabolism; UMP biosynthesis via salvage pathway; UMP from uracil: step 1/1. With respect to regulation, allosterically activated by GTP. In terms of biological role, catalyzes the conversion of uracil and 5-phospho-alpha-D-ribose 1-diphosphate (PRPP) to UMP and diphosphate. The protein is Uracil phosphoribosyltransferase of Laribacter hongkongensis (strain HLHK9).